The sequence spans 648 residues: Fidgetin-like protein 2 (648 aa).

A disordered region spans residues 1 to 36; the sequence is MHWTPEHAQPLNQWPEQHLDVSSTTPSPAHKLELPP. Positions 10–27 are enriched in polar residues; it reads PLNQWPEQHLDVSSTTPS. Residues A394 and 434-439 contribute to the ATP site; that span reads GCGKAL.

This sequence belongs to the AAA ATPase family. Mg(2+) is required as a cofactor.

It is found in the cytoplasm. Its subcellular location is the cell cortex. It carries out the reaction ATP + H2O = ADP + phosphate + H(+). In terms of biological role, microtubule-severing enzyme that negatively regulates cell migration and wound healing. In migrating cells, targets dynamic microtubules (MTs) at the leading edge and severs them, thereby suppressing motility. Microtubule severing releases ARHGEF2 which activates RHOA, which in turn regulates focal ahesion turnover via focal adhesion kinase, as opposed to F-actin polymerization, to suppress cell motility. Negative regulator of axon regeneration that suppresses axonal growth by selectively severing dynamic MTs in the distal axon shaft and growth cone. Contributes to proper cell branching during endothelial and neuronal development. The protein is Fidgetin-like protein 2 (Fignl2) of Rattus norvegicus (Rat).